The following is a 145-amino-acid chain: Large ribosomal subunit protein uL13 (145 aa).

This sequence belongs to the universal ribosomal protein uL13 family. As to quaternary structure, part of the 50S ribosomal subunit.

Its function is as follows. This protein is one of the early assembly proteins of the 50S ribosomal subunit, although it is not seen to bind rRNA by itself. It is important during the early stages of 50S assembly. This Staphylococcus haemolyticus (strain JCSC1435) protein is Large ribosomal subunit protein uL13.